A 363-amino-acid chain; its full sequence is Cellular tumor antigen p53 (363 aa).

The segment at 1–29 (MEPSSETGMDPPLSQETFEDLWSLLPDPL) is transcription activation (acidic). The DNA-binding element occupies 76 to 267 (DYAGKYGLQL…RTEEDNYTKK (192 aa)). Cysteine 150, histidine 153, cysteine 213, and cysteine 217 together coordinate Zn(2+). Residues 248–255 (RVCACPGR) form an interaction with DNA region. The interval 257-290 (RRTEEDNYTKKRGLKPSGKRELAHPPSSEPPLPK) is disordered. Residues 275-292 (KRELAHPPSSEPPLPKKR) carry the Bipartite nuclear localization signal motif. The interval 300-331 (EEIFTLRIKGRSRYEMIKKLNDALELQESLDQ) is oligomerization. The Nuclear export signal signature appears at 314 to 325 (EMIKKLNDALEL). A basic (repression of DNA-binding) region spans residues 344 to 356 (EIKPKKGKKLLVK).

It belongs to the p53 family. In terms of assembly, binds DNA as a homotetramer. The cofactor is Zn(2+). Ubiquitous.

Its subcellular location is the cytoplasm. It is found in the nucleus. Its function is as follows. Multifunctional transcription factor that induces cell cycle arrest, DNA repair or apoptosis upon binding to its target DNA sequence. Acts as a tumor suppressor in many tumor types; induces growth arrest or apoptosis depending on the physiological circumstances and cell type. Negatively regulates cell division by controlling expression of a set of genes required for this process. One of the activated genes is an inhibitor of cyclin-dependent kinases. Apoptosis induction seems to be mediated either by stimulation of BAX and FAS antigen expression, or by repression of Bcl-2 expression. The chain is Cellular tumor antigen p53 (tp53) from Xenopus laevis (African clawed frog).